Consider the following 124-residue polypeptide: Acidic phospholipase A2 (124 aa).

Disulfide bonds link C26–C116, C28–C44, C43–C95, C49–C124, C50–C88, C57–C81, and C75–C86. Residues Y27, G29, and G31 each contribute to the Ca(2+) site. Residue H47 is part of the active site. Residue D48 participates in Ca(2+) binding. The active site involves D89.

This sequence belongs to the phospholipase A2 family. Group II subfamily. D49 sub-subfamily. Requires Ca(2+) as cofactor. As to expression, expressed by the venom gland.

Its subcellular location is the secreted. It catalyses the reaction a 1,2-diacyl-sn-glycero-3-phosphocholine + H2O = a 1-acyl-sn-glycero-3-phosphocholine + a fatty acid + H(+). Functionally, snake venom phospholipase A2 (PLA2) that inhibits ADP-induced platelet aggregation. PLA2 catalyzes the calcium-dependent hydrolysis of the 2-acyl groups in 3-sn-phosphoglycerides. This is Acidic phospholipase A2 from Gloydius ussuriensis (Ussuri mamushi).